Here is a 333-residue protein sequence, read N- to C-terminus: Nucleoid-associated protein YE1421 (333 aa).

Belongs to the YejK family.

Its subcellular location is the cytoplasm. It localises to the nucleoid. In Yersinia enterocolitica serotype O:8 / biotype 1B (strain NCTC 13174 / 8081), this protein is Nucleoid-associated protein YE1421.